Reading from the N-terminus, the 226-residue chain is Leucyl/phenylalanyl-tRNA--protein transferase (226 aa).

Belongs to the L/F-transferase family.

It is found in the cytoplasm. It carries out the reaction N-terminal L-lysyl-[protein] + L-leucyl-tRNA(Leu) = N-terminal L-leucyl-L-lysyl-[protein] + tRNA(Leu) + H(+). It catalyses the reaction N-terminal L-arginyl-[protein] + L-leucyl-tRNA(Leu) = N-terminal L-leucyl-L-arginyl-[protein] + tRNA(Leu) + H(+). The catalysed reaction is L-phenylalanyl-tRNA(Phe) + an N-terminal L-alpha-aminoacyl-[protein] = an N-terminal L-phenylalanyl-L-alpha-aminoacyl-[protein] + tRNA(Phe). Functions in the N-end rule pathway of protein degradation where it conjugates Leu, Phe and, less efficiently, Met from aminoacyl-tRNAs to the N-termini of proteins containing an N-terminal arginine or lysine. The polypeptide is Leucyl/phenylalanyl-tRNA--protein transferase (Pseudomonas fluorescens (strain ATCC BAA-477 / NRRL B-23932 / Pf-5)).